Reading from the N-terminus, the 194-residue chain is Protein GrpE (194 aa).

Residues 1–53 (MVENEKTSVEETEEKAETEDEMLTEDPSNEDSDEANEEGNELSEEEKRIAELE) are disordered. The span at 10-44 (EETEEKAETEDEMLTEDPSNEDSDEANEEGNELSE) shows a compositional bias: acidic residues.

Belongs to the GrpE family. Homodimer.

It is found in the cytoplasm. Its function is as follows. Participates actively in the response to hyperosmotic and heat shock by preventing the aggregation of stress-denatured proteins, in association with DnaK and GrpE. It is the nucleotide exchange factor for DnaK and may function as a thermosensor. Unfolded proteins bind initially to DnaJ; upon interaction with the DnaJ-bound protein, DnaK hydrolyzes its bound ATP, resulting in the formation of a stable complex. GrpE releases ADP from DnaK; ATP binding to DnaK triggers the release of the substrate protein, thus completing the reaction cycle. Several rounds of ATP-dependent interactions between DnaJ, DnaK and GrpE are required for fully efficient folding. This chain is Protein GrpE, found in Halalkalibacterium halodurans (strain ATCC BAA-125 / DSM 18197 / FERM 7344 / JCM 9153 / C-125) (Bacillus halodurans).